The following is a 1682-amino-acid chain: Merozoite surface protein 1 (1682 aa).

An N-terminal signal peptide occupies residues 1–19; that stretch reads MKIIFFLCSFLFFIINTQC. A disordered region spans residues 68-110; it reads AVSTQSAKNPPGATVPSGTASTKGAIRSPGAANPSDDSSDSDA. N-linked (GlcNAc...) asparagine glycosylation is found at Asn233, Asn462, Asn528, and Asn599. Residues 696 to 729 form a disordered region; that stretch reads SETTEDGGHSTHTLSQSGETEVTEETEETVGHTT. Residues Asn785, Asn881, Asn901, Asn947, Asn1071, and Asn1178 are each glycosylated (N-linked (GlcNAc...) asparagine). Residues 870–918 form a disordered region; sequence ITGTSSTSSPGNTTVNTAQSATHSNSQNQQSNASSTNTQNGVAVSSGPA. The span at 871–909 shows a compositional bias: low complexity; sequence TGTSSTSSPGNTTVNTAQSATHSNSQNQQSNASSTNTQN. Disordered stretches follow at residues 1212–1241 and 1433–1453; these read TPPQ…TQIP and KEFP…DEQK. A compositionally biased stretch (polar residues) spans 1227 to 1241; sequence VSGSSGSTKEETQIP. Pro residues predominate over residues 1437–1446; the sequence is SSPPTTPPSP. Asn1569 carries an N-linked (GlcNAc...) asparagine glycan. EGF-like domains follow at residues 1573-1613 and 1614-1661; these read HQCV…VENP and NPTC…IFCS. 6 disulfide bridges follow: Cys1575-Cys1586, Cys1580-Cys1596, Cys1598-Cys1609, Cys1617-Cys1630, Cys1624-Cys1644, and Cys1646-Cys1660. Ser1661 is lipidated: GPI-anchor amidated serine. A propeptide spans 1662 to 1682 (removed in mature form); that stretch reads SSNFLGISFLLILMLILYSFI.

Forms a complex composed of subunits p83, p30, p38, and p42 which remain non-covalently associated; the complex is formed at the merozoite surface prior to egress from host erythrocytes. Forms a complex composed of processed MSP1 subunits, MSP6 subunit p36 and MSP7; the complex is formed at the merozoite surface prior to egress from host erythrocytes. Within the complex, interacts (via subunit p38) with MSP6 subunit p36 and (via subunits p83, p30 and p38) with MSP7 (via subunit p22). Forms a complex composed of MSP1, MSP6, DBLMSP1 and DBLMSP2. Within the complex, interacts (via subunit p38) with DBLMSP1 and DBLMSP2. Forms a complex composed of MSP1, and rhoptry proteins RhopH3, RAP1 and CLAG9/RhopH3. Within the complex, interacts (via subunits p42 and p19) with RhopH3 (via C-terminus). Forms a complex composed of MSP1, MSP6, MSP7, MSP9 and MSP3; within the complex, MSP6 and MSP9 mediate the binding to the host erythrocyte. Interacts (via subunits p19 and p42) with MSP9; the interaction is direct; MSP1 subunits p19 or p42, and MSP9 form a co-ligand complex that interacts with host SLC4A1/Band 3 protein. May interact with PFD6. Interacts with host spectrin. In terms of assembly, interacts with host glycophorin GYPA in a sialic acid-independent manner. As to quaternary structure, interacts with host proinflammatory cytokine S100P; the interaction blocks S100P inflammatory and chemotactic activities. Interacts with host SLC4A1/Band 3 (via 5ABC region) on the host erythrocyte surface in a sialic acid-independent manner. In terms of processing, the p190 precursor is cleaved by SUB1 prior to merozoite egress into 4 subunits p83, p30, p38, and p42 which remain non-covalently associated. SUB1-mediated proteolytic cleavage occurs in an orderly manner; the first cleavage occurs at the p30/p38 site, followed by cleavage at the p83/p30 site, the last cleavage occurs at the p38/p42 site. The order of cleavage is essential for parasite viability. SUB1-mediated processing is essential for merozoite egress. In a second processing step during erythrocyte invasion, p42 is cleaved by SUB2 into p33 and p19; the latter remains attached to the merozoite surface via its GPI-anchor and is endocytosed during the subsequent ring stage.

It localises to the cell membrane. The protein resides in the secreted. The protein localises to the vacuole membrane. Functionally, during the asexual blood stage, involved in merozoite egress from host erythrocytes possibly via its interaction with the host cytoskeleton protein spectrin resulting in the destabilization of the host cytoskeleton and thus leading to erythrocyte cell membrane rupture. Involved in the binding to host erythrocytes and is required for host erythrocyte invasion. Its function is as follows. By binding to host proinflammatory cytokine S100P may interfere with host immune responses. Involved in merozoite invasion of host erythrocytes. May play a role in the biogenesis and/or function of the food vacuole during the intraerythrocytic development. The protein is Merozoite surface protein 1 of Plasmodium falciparum (isolate ro-33 / Ghana).